The chain runs to 272 residues: TIP41-like protein (272 aa).

Lysine 106 bears the N6-acetyllysine mark. The tract at residues 173 to 272 (RVMPSSFFLL…ADSQKSTQVE (100 aa)) is interaction with PPP2CA. Serine 265 carries the post-translational modification Phosphoserine.

The protein belongs to the TIP41 family. As to quaternary structure, isoform 1 interacts with PPP2CA. Isoform 2 does not interact with PPP2CA. Interacts with PPP2CB, PPP4C and PPP6C. Interacts with IGBP1; the interaction is dependent on PPP2CA. Associates with a protein phosphatase 2A PP2A(C):IGBP1 complex. Interacts with PPP4C and PPP4R2.

Its subcellular location is the cytoplasm. In terms of biological role, may be a allosteric regulator of serine/threonine-protein phosphatase 2A (PP2A). Isoform 1 inhibits catalytic activity of the PP2A(D) core complex in vitro. The PP2A(C):TIPRL complex does not show phosphatase activity. Acts as a negative regulator of serine/threonine-protein phosphatase 4 probably by inhibiting the formation of the active PPP4C:PPP4R2 complex; the function is proposed to implicate it in DNA damage response by promoting H2AX phosphorylated on Ser-140 (gamma-H2AX). May play a role in the regulation of ATM/ATR signaling pathway controlling DNA replication and repair. This Homo sapiens (Human) protein is TIP41-like protein (TIPRL).